The chain runs to 207 residues: Serotonin N-acetyltransferase (207 aa).

Positions 1-28 (MSTQSTHPLKPEAPRLPPGIPESPSCQR) are disordered. T31 carries the phosphothreonine; by PKA modification. The N-acetyltransferase domain maps to 35 to 194 (SEFRCLTPED…SLTFMELHCS (160 aa)). L124 contacts substrate. Residues 124 to 126 (LAV) and 132 to 137 (QQGRGP) contribute to the acetyl-CoA site. M159 is a binding site for substrate. 168-170 (YER) lines the acetyl-CoA pocket. At S205 the chain carries Phosphoserine.

This sequence belongs to the acetyltransferase family. AANAT subfamily. As to quaternary structure, monomer. Interacts with several 14-3-3 proteins, including YWHAB, YWHAE, YWHAG and YWHAZ, preferentially when phosphorylated at Thr-31. Phosphorylation on Ser-205 also allows binding to YWHAZ, but with lower affinity. The interaction with YWHAZ considerably increases affinity for arylalkylamines and acetyl-CoA and protects the enzyme from dephosphorylation and proteasomal degradation. It may also prevent thiol-dependent inactivation. In terms of processing, cAMP-dependent phosphorylation on both N-terminal Thr-31 and C-terminal Ser-205 regulates AANAT activity by promoting interaction with 14-3-3 proteins. As to expression, highly expressed in pineal gland and at lower levels in the retina. Weak expression in several brain regions and in the pituitary gland.

Its subcellular location is the cytoplasm. It catalyses the reaction a 2-arylethylamine + acetyl-CoA = an N-acetyl-2-arylethylamine + CoA + H(+). It functions in the pathway aromatic compound metabolism; melatonin biosynthesis; melatonin from serotonin: step 1/2. Its function is as follows. Controls the night/day rhythm of melatonin production in the pineal gland. Catalyzes the N-acetylation of serotonin into N-acetylserotonin, the penultimate step in the synthesis of melatonin. This chain is Serotonin N-acetyltransferase (AANAT), found in Homo sapiens (Human).